Consider the following 282-residue polypeptide: Cholesterol 25-hydroxylase-like protein 1, member 1 (282 aa).

N-linked (GlcNAc...) asparagine glycosylation occurs at Asn-3. Helical transmembrane passes span 40–60, 85–107, and 127–147; these read FFPVLLAFSSYIIFSVPFAVL, MLRTLWTAVYNHLVFVLPAVLIT, and FSGGLGALLVFDTQYFLWHMV. Residues 133 to 265 enclose the Fatty acid hydroxylase domain; sequence ALLVFDTQYF…FSHWDKIFGT (133 aa). The short motif at 144–148 is the Histidine box-1 element; it reads WHMVH. Residues 159-163 carry the Histidine box-2 motif; sequence HAIHH. The short motif at 240-246 is the Histidine box-3 element; it reads AHDMHHQ.

It belongs to the sterol desaturase family. Fe cation serves as cofactor.

It is found in the endoplasmic reticulum membrane. In terms of biological role, may catalyze the formation of 25-hydroxycholesterol from cholesterol. This chain is Cholesterol 25-hydroxylase-like protein 1, member 1 (ch25hl1.1), found in Danio rerio (Zebrafish).